A 710-amino-acid chain; its full sequence is DNA topoisomerase 1 (710 aa).

A disordered region spans residues 1-22; it reads MPTSTKSKTKTTTKKKTTRKRV. Positions 7–22 are enriched in basic residues; the sequence is SKTKTTTKKKTTRKRV. Positions 26–136 constitute a Toprim domain; it reads KNLVIVESPA…EKNRVVFNEI (111 aa). 2 residues coordinate Mg(2+): E32 and D105. Positions 152–574 constitute a Topo IA-type catalytic domain; that stretch reads DVDLVDAQQA…QFYKPFAKEL (423 aa). Residues 186-191 form an interaction with DNA region; that stretch reads SAGRVQ. Y321 (O-(5'-phospho-DNA)-tyrosine intermediate) is an active-site residue. 2 C4-type zinc fingers span residues 595–621 and 635–663; these read CDVC…FPDC and CPLC…YPDC. A C4-type 3; atypical zinc finger spans residues 676-702; the sequence is CPKSGHFLVEKKVRGGGKQVVCSNDEC.

The protein belongs to the type IA topoisomerase family. Monomer. Mg(2+) serves as cofactor.

It catalyses the reaction ATP-independent breakage of single-stranded DNA, followed by passage and rejoining.. In terms of biological role, releases the supercoiling and torsional tension of DNA, which is introduced during the DNA replication and transcription, by transiently cleaving and rejoining one strand of the DNA duplex. Introduces a single-strand break via transesterification at a target site in duplex DNA. The scissile phosphodiester is attacked by the catalytic tyrosine of the enzyme, resulting in the formation of a DNA-(5'-phosphotyrosyl)-enzyme intermediate and the expulsion of a 3'-OH DNA strand. The free DNA strand then undergoes passage around the unbroken strand, thus removing DNA supercoils. Finally, in the religation step, the DNA 3'-OH attacks the covalent intermediate to expel the active-site tyrosine and restore the DNA phosphodiester backbone. The sequence is that of DNA topoisomerase 1 from Lactococcus lactis subsp. lactis (strain IL1403) (Streptococcus lactis).